The following is a 413-amino-acid chain: Serine hydroxymethyltransferase (413 aa).

Residues leucine 120 and 124–126 (GHL) contribute to the (6S)-5,6,7,8-tetrahydrofolate site. Residue lysine 229 is modified to N6-(pyridoxal phosphate)lysine. 352 to 354 (SPF) contacts (6S)-5,6,7,8-tetrahydrofolate.

Belongs to the SHMT family. In terms of assembly, homodimer. The cofactor is pyridoxal 5'-phosphate.

The protein resides in the cytoplasm. It catalyses the reaction (6R)-5,10-methylene-5,6,7,8-tetrahydrofolate + glycine + H2O = (6S)-5,6,7,8-tetrahydrofolate + L-serine. It participates in one-carbon metabolism; tetrahydrofolate interconversion. Its pathway is amino-acid biosynthesis; glycine biosynthesis; glycine from L-serine: step 1/1. Catalyzes the reversible interconversion of serine and glycine with tetrahydrofolate (THF) serving as the one-carbon carrier. This reaction serves as the major source of one-carbon groups required for the biosynthesis of purines, thymidylate, methionine, and other important biomolecules. Also exhibits THF-independent aldolase activity toward beta-hydroxyamino acids, producing glycine and aldehydes, via a retro-aldol mechanism. The protein is Serine hydroxymethyltransferase of Heliobacterium modesticaldum (strain ATCC 51547 / Ice1).